Consider the following 246-residue polypeptide: Sec-independent protein translocase protein TatB (246 aa).

The chain crosses the membrane as a helical span at residues 1-21; that stretch reads MFDIGWSELLVIAVVLIVVVG. Disordered regions lie at residues 94–122, 179–204, and 225–246; these read SDLQ…APLV, SRSK…PKPT, and VADA…KDEA. 2 stretches are compositionally biased toward polar residues: residues 97–112 and 187–197; these read QKAT…TAAP and PETTVATNASE.

This sequence belongs to the TatB family. The Tat system comprises two distinct complexes: a TatABC complex, containing multiple copies of TatA, TatB and TatC subunits, and a separate TatA complex, containing only TatA subunits. Substrates initially bind to the TatABC complex, which probably triggers association of the separate TatA complex to form the active translocon.

The protein resides in the cell inner membrane. In terms of biological role, part of the twin-arginine translocation (Tat) system that transports large folded proteins containing a characteristic twin-arginine motif in their signal peptide across membranes. Together with TatC, TatB is part of a receptor directly interacting with Tat signal peptides. TatB may form an oligomeric binding site that transiently accommodates folded Tat precursor proteins before their translocation. This is Sec-independent protein translocase protein TatB from Agrobacterium fabrum (strain C58 / ATCC 33970) (Agrobacterium tumefaciens (strain C58)).